The chain runs to 846 residues: Protein kintoun (846 aa).

4 disordered regions span residues 1 to 21, 372 to 416, 581 to 657, and 743 to 846; these read MSTA…ERAD, YLSR…PALT, HTSI…DSTI, and HDSS…DDEI. At serine 378 the chain carries Phosphoserine. Acidic residues predominate over residues 389–403; that stretch reads PVEDDADGDMPETPE. Composition is skewed to basic residues over residues 596-612 and 750-766; these read LHKK…KKQR and QRKK…RAQQ. The residue at position 770 (serine 770) is a Phosphoserine. Positions 821–832 are enriched in basic and acidic residues; the sequence is TRQDHADADAKN.

This sequence belongs to the PIH1 family. Kintoun subfamily. As to quaternary structure, interacts with Pp1alpha-96A, Pp1-87B, Pp1-13C and flw.

It localises to the cytoplasm. Functionally, required for cytoplasmic pre-assembly of axonemal dyneins, thereby playing a central role in motility in cilia and flagella. Involved in pre-assembly of dynein arm complexes in the cytoplasm before intraflagellar transport loads them for the ciliary compartment. This chain is Protein kintoun, found in Drosophila persimilis (Fruit fly).